The following is an 85-amino-acid chain: UPF0291 protein SAK_0343 (85 aa).

Residues 58–85 (GNDVTPEKLRQVQREKGLHGRSLDDPNS) form a disordered region. Residues 62-85 (TPEKLRQVQREKGLHGRSLDDPNS) are compositionally biased toward basic and acidic residues.

Belongs to the UPF0291 family.

It localises to the cytoplasm. The polypeptide is UPF0291 protein SAK_0343 (Streptococcus agalactiae serotype Ia (strain ATCC 27591 / A909 / CDC SS700)).